Reading from the N-terminus, the 351-residue chain is UDP-3-O-acylglucosamine N-acyltransferase (351 aa).

Histidine 240 serves as the catalytic Proton acceptor.

Belongs to the transferase hexapeptide repeat family. LpxD subfamily. In terms of assembly, homotrimer.

It catalyses the reaction a UDP-3-O-[(3R)-3-hydroxyacyl]-alpha-D-glucosamine + a (3R)-hydroxyacyl-[ACP] = a UDP-2-N,3-O-bis[(3R)-3-hydroxyacyl]-alpha-D-glucosamine + holo-[ACP] + H(+). It functions in the pathway bacterial outer membrane biogenesis; LPS lipid A biosynthesis. Its function is as follows. Catalyzes the N-acylation of UDP-3-O-acylglucosamine using 3-hydroxyacyl-ACP as the acyl donor. Is involved in the biosynthesis of lipid A, a phosphorylated glycolipid that anchors the lipopolysaccharide to the outer membrane of the cell. This is UDP-3-O-acylglucosamine N-acyltransferase from Pseudomonas syringae pv. tomato (strain ATCC BAA-871 / DC3000).